Here is a 92-residue protein sequence, read N- to C-terminus: Small ribosomal subunit protein uS19c (92 aa).

Belongs to the universal ribosomal protein uS19 family.

It is found in the plastid. The protein resides in the chloroplast. Functionally, protein S19 forms a complex with S13 that binds strongly to the 16S ribosomal RNA. The chain is Small ribosomal subunit protein uS19c from Cucumis sativus (Cucumber).